Consider the following 430-residue polypeptide: Protein DSE3 (430 aa).

S395 carries the post-translational modification Phosphoserine.

The protein localises to the bud neck. Its function is as follows. May be involved in the establishment of the daughter fate. The sequence is that of Protein DSE3 (DSE3) from Saccharomyces cerevisiae (strain ATCC 204508 / S288c) (Baker's yeast).